The primary structure comprises 338 residues: Protein pelota homolog (338 aa).

Belongs to the eukaryotic release factor 1 family. Pelota subfamily. As to quaternary structure, monomer. A divalent metal cation is required as a cofactor.

The protein localises to the cytoplasm. May function in recognizing stalled ribosomes, interact with stem-loop structures in stalled mRNA molecules, and effect endonucleolytic cleavage of the mRNA. May play a role in the release non-functional ribosomes and degradation of damaged mRNAs. Has endoribonuclease activity. This Caldivirga maquilingensis (strain ATCC 700844 / DSM 13496 / JCM 10307 / IC-167) protein is Protein pelota homolog.